Reading from the N-terminus, the 338-residue chain is MGSSSSTALARLGLPGQPRSTWLGVAALGLAAVALGTVAWRRARPRRRRQLQQVGTVSKVWIYPIKSCKGVSVCETECTDMGLRCGKVRDRFWMVVKEDGHMITARQEPRLVLVTITLENNYLMLEAPGMEPIVLPIKLPSSNKIHDCRLFGLDIKGRDCGDEVARWFTSYLKTQAYRLVQFDTKMKGRTTKKLYPSESYLQNYEVAYPDCSPIHLISEASLVDLNTRLQKKVKMEYFRPNIVVSGCEAFEEDTWDELLIGDVEMKRVLSCPRCVLTTVDPDTGIIDRKEPLETLKSYRLCDPSVKSLYQSSPLFGMYFSVEKIGSLRVGDPVYRMVD.

The transit peptide at 1 to 35 (MGSSSSTALARLGLPGQPRSTWLGVAALGLAAVAL) directs the protein to the mitochondrion. Glycyl lysine isopeptide (Lys-Gly) (interchain with G-Cter in ubiquitin) cross-links involve residues Lys59, Lys138, and Lys144. Position 156 is an N6-acetyllysine; alternate (Lys156). A Glycyl lysine isopeptide (Lys-Gly) (interchain with G-Cter in ubiquitin); alternate cross-link involves residue Lys156. Residues Lys173, Lys187, Lys289, and Lys296 each participate in a glycyl lysine isopeptide (Lys-Gly) (interchain with G-Cter in ubiquitin) cross-link. The region spanning 188 to 336 (GRTTKKLYPS…LRVGDPVYRM (149 aa)) is the MOSC domain.

In terms of assembly, component of a complex composed of cytochrome b5, NADH-cytochrome b5 reductase (CYB5R3) and MTARC2. Mo-molybdopterin serves as cofactor. Post-translationally, ubiquitinated by PRKN during mitophagy, leading to its degradation and enhancement of mitophagy. Deubiquitinated by USP30.

It is found in the mitochondrion outer membrane. The protein localises to the peroxisome. It carries out the reaction N(omega)-hydroxy-L-arginine + 2 Fe(II)-[cytochrome b5] + 2 H(+) = L-arginine + 2 Fe(III)-[cytochrome b5] + H2O. Its function is as follows. Catalyzes the reduction of N-oxygenated molecules, acting as a counterpart of cytochrome P450 and flavin-containing monooxygenases in metabolic cycles. As a component of prodrug-converting system, reduces a multitude of N-hydroxylated prodrugs particularly amidoximes, leading to increased drug bioavailability. May be involved in mitochondrial N(omega)-hydroxy-L-arginine (NOHA) reduction, regulating endogenous nitric oxide levels and biosynthesis. Postulated to cleave the N-OH bond of N-hydroxylated substrates in concert with electron transfer from NADH to cytochrome b5 reductase then to cytochrome b5, the ultimate electron donor that primes the active site for substrate reduction. The protein is Mitochondrial amidoxime reducing component 2 (Mtarc2) of Rattus norvegicus (Rat).